The following is a 365-amino-acid chain: 3-isopropylmalate dehydrogenase (365 aa).

78–91 (GPKWDTLPAEERPE) contributes to the NAD(+) binding site. Residues Arg-99, Arg-109, Arg-138, and Asp-227 each coordinate substrate. Mg(2+)-binding residues include Asp-227, Asp-251, and Asp-255. An NAD(+)-binding site is contributed by 285-297 (GSAPDIAGKNIAN).

It belongs to the isocitrate and isopropylmalate dehydrogenases family. LeuB type 1 subfamily. In terms of assembly, homodimer. Mg(2+) is required as a cofactor. Mn(2+) serves as cofactor.

The protein resides in the cytoplasm. It carries out the reaction (2R,3S)-3-isopropylmalate + NAD(+) = 4-methyl-2-oxopentanoate + CO2 + NADH. The protein operates within amino-acid biosynthesis; L-leucine biosynthesis; L-leucine from 3-methyl-2-oxobutanoate: step 3/4. Functionally, catalyzes the oxidation of 3-carboxy-2-hydroxy-4-methylpentanoate (3-isopropylmalate) to 3-carboxy-4-methyl-2-oxopentanoate. The product decarboxylates to 4-methyl-2 oxopentanoate. In Syntrophotalea carbinolica (strain DSM 2380 / NBRC 103641 / GraBd1) (Pelobacter carbinolicus), this protein is 3-isopropylmalate dehydrogenase.